The primary structure comprises 336 residues: Dihydroorotate dehydrogenase (quinone) (336 aa).

FMN contacts are provided by residues 62–66 (AGLDK) and Thr86. Lys66 is a substrate binding site. 111-115 (NRMGF) is a binding site for substrate. Residues Asn139 and Asn172 each contribute to the FMN site. Position 172 (Asn172) interacts with substrate. The active-site Nucleophile is Ser175. Position 177 (Asn177) interacts with substrate. Residues Lys217 and Thr245 each coordinate FMN. 246-247 (NT) is a binding site for substrate. Residues Gly268, Gly297, and 318–319 (YS) contribute to the FMN site.

The protein belongs to the dihydroorotate dehydrogenase family. Type 2 subfamily. As to quaternary structure, monomer. FMN serves as cofactor.

The protein resides in the cell membrane. It carries out the reaction (S)-dihydroorotate + a quinone = orotate + a quinol. The protein operates within pyrimidine metabolism; UMP biosynthesis via de novo pathway; orotate from (S)-dihydroorotate (quinone route): step 1/1. In terms of biological role, catalyzes the conversion of dihydroorotate to orotate with quinone as electron acceptor. The chain is Dihydroorotate dehydrogenase (quinone) from Cronobacter sakazakii (strain ATCC BAA-894) (Enterobacter sakazakii).